We begin with the raw amino-acid sequence, 3948 residues long: Hybrid PKS-NRPS synthetase ucsA (3948 aa).

One can recognise a Ketosynthase family 3 (KS3) domain in the interval 11–440 (NEPIAVIGSG…GTNAHAILER (430 aa)). Catalysis depends on for beta-ketoacyl synthase activity residues C184, H323, and H363. Residues 548–881 (IFTGQGAQWP…FSTAIGQLWA (334 aa)) are malonyl-CoA:ACP transacylase (MAT) domain. The segment at 940–1079 (HPLLGTLGAD…GHIRLTITDF (140 aa)) is N-terminal hotdog fold. The dehydratase (DH) domain stretch occupies residues 940-1254 (HPLLGTLGAD…IRLIPFAAAS (315 aa)). The PKS/mFAS DH domain occupies 940–1256 (HPLLGTLGAD…LIPFAAASEA (317 aa)). H972 functions as the Proton acceptor; for dehydratase activity in the catalytic mechanism. The tract at residues 1098–1256 (MTEVDQNLFY…LIPFAAASEA (159 aa)) is C-terminal hotdog fold. The active-site Proton donor; for dehydratase activity is D1161. The interval 1299 to 1460 (LAHVVGQITH…LRAGFTGVET (162 aa)) is methyltransferase (MT) domain. The interval 1989 to 2165 (TYILFGLAGA…ASVIDIGPIS (177 aa)) is ketoreductase (KR) domain. Residues 2275–2357 (DVARVLRHAI…GLVDFAVDNL (83 aa)) enclose the Carrier 1 domain. S2317 carries the post-translational modification O-(pantetheine 4'-phosphoryl)serine. The span at 2381 to 2404 (PKAKTDAPAAAPTPASATAPGSKS) shows a compositional bias: low complexity. The interval 2381–2473 (PKAKTDAPAA…SSQAASLESS (93 aa)) is disordered. 2 stretches are compositionally biased toward polar residues: residues 2405–2418 (DGNV…ADQS) and 2426–2437 (PQPTAILTNATA). Over residues 2441 to 2456 (PVSPSLSVTGSTSSAA) the composition is skewed to low complexity. The span at 2462-2473 (PTSSQAASLESS) shows a compositional bias: polar residues. The condensation (C) domain stretch occupies residues 2489 to 2926 (EKTLPMSYGQ…PQIFNSSKVQ (438 aa)). Positions 2950-3355 (DIAAVQPTLT…GEFVLQARIK (406 aa)) are adenylation (A) (KR) domain. A disordered region spans residues 3483–3507 (PLTNKGGLKETPVARPTRYQNDPIP). Residues 3513-3592 (SSPFSSLDQV…QMASLLDGKD (80 aa)) form the Carrier 2 domain. O-(pantetheine 4'-phosphoryl)serine is present on S3552. Residues 3633–3852 (LTGATGFLGL…QFVPVEDVAN (220 aa)) form a reductase (R) domain region.

It in the C-terminal section; belongs to the NRP synthetase family.

Its pathway is mycotoxin biosynthesis. Its function is as follows. Hybrid PKS-NRPS synthetase; part of the gene cluster that mediates the biosynthesis of UCS1025A, a member of the pyrrolizidinone family that acts as a strong telomerase inhibitor and displays potent antibacterial and antitumor properties. These compounds share a hemiaminal-containing pyrrolizidinone core fused with a gamma-lactone, giving a furopyrrolizidine that is connected to a decalin fragment. The polyketide synthase module (PKS) of the PKS-NRPS ucsA is responsible for the synthesis of the polyketide backbone via the condensation of an acetyl-CoA starter unit with 6 malonyl-CoA units. The downstream nonribosomal peptide synthetase (NRPS) module then amidates the carboxyl end of the polyketide with a 2S,3S-methylproline derived from L-isoleucine by the 2-oxoglutarate-dependent dioxygenase ucsF which converts L-isoleucine to (4S,5S)-4-methylpyrroline-5-carboxylate that is further converted to 2S,3S-methylproline by the pyrroline-5-carboxylate reductase ucsG. Reductive release of the completed aminoacyl polyketide from the assembly line can form the 3-pyrrolin-2-one structure via an intramolecular Knoevenagel reaction. Because ucsA lacks a designated enoylreductase (ER) domain, the required activity is provided the enoyl reductase ucsL. This keto acyclic precursor is the substrate of the Diels-Alderase ucsH, that catalyzes the Diels-Alder cycloaddition. Oxidation of the 3S-methyl group to a carboxylate by the cytochrome P450 monooxygenase ucsK allows an oxa-Michael cyclization that might involve the reductase/dehydrogenase ucsI and which furnishes the furopyrrolizidine. The oxidase ucsJ likely plays a critical role in stereoselective reduction of the C5-C6 double bond to afford the required R-configured carboxylate group. Further enolization and oxidation at C5 by an unidentified enzyme affords the last intermediate that can undergo oxa-Michael cyclization to yield UCS1025A. The chain is Hybrid PKS-NRPS synthetase ucsA from Acremonium sp.